Here is a 200-residue protein sequence, read N- to C-terminus: Recombination protein RecR (200 aa).

The segment at 58 to 75 (CSNCFCLKISQTSPCNFC) adopts a C4-type zinc-finger fold. One can recognise a Toprim domain in the interval 82–177 (SSLCIVATPK…KISRLALGMP (96 aa)).

This sequence belongs to the RecR family.

Its function is as follows. May play a role in DNA repair. It seems to be involved in an RecBC-independent recombinational process of DNA repair. It may act with RecF and RecO. The protein is Recombination protein RecR of Chlamydia trachomatis serovar L2 (strain ATCC VR-902B / DSM 19102 / 434/Bu).